A 189-amino-acid chain; its full sequence is GTPase NRas (189 aa).

Residues 10–18 (GAGGVGKSA) and 29–30 (VD) each bind GTP. Positions 32–40 (YDPTIEDSY) match the Effector region motif. Threonine 35 carries (Microbial infection) O-linked (Glc) threonine; by P.sordellii toxin TcsL glycosylation. 57-61 (DTAGQ) provides a ligand contact to GTP. Serine 89 is subject to Phosphoserine. 116-119 (NKCD) is a binding site for GTP. The hypervariable region stretch occupies residues 166 to 185 (YRMKKLNSSDDGTQGCMGLP). Lysine 170 is covalently cross-linked (Glycyl lysine isopeptide (Lys-Gly) (interchain with G-Cter in ubiquitin)). Cysteine 181 carries S-palmitoyl cysteine lipidation. The S-farnesyl cysteine moiety is linked to residue cysteine 186. Residues 187–189 (VVM) constitute a propeptide, removed in mature form.

Belongs to the small GTPase superfamily. Ras family. In terms of assembly, interacts (active GTP-bound form preferentially) with RGS14. Interacts (active GTP-bound form) with RASSF7. Interacts (active GTP-bound form) with both SHOC2 and PP1c (all isoforms) to form a tertiary complex; SHOC2 and PP1c preferably bind M-Ras/MRAS, but they also bind K-Ras/KRAS, N-Ras/NRAS and H-Ras/HRAS. Post-translationally, palmitoylated by the ZDHHC9-GOLGA7 complex. Depalmitoylated by ABHD17A, ABHD17B and ABHD17C. A continuous cycle of de- and re-palmitoylation regulates rapid exchange between plasma membrane and Golgi. In terms of processing, acetylation at Lys-104 prevents interaction with guanine nucleotide exchange factors (GEFs). Fatty-acylated at Lys-169 and/or Lys-170. Post-translationally, ubiquitinated by the BCR(LZTR1) E3 ubiquitin ligase complex at Lys-170 in a non-degradative manner, leading to inhibit Ras signaling by decreasing Ras association with membranes. In terms of processing, phosphorylation at Ser-89 enhances NRAS association with its downstream effectors. (Microbial infection) Glucosylated at Thr-35 by P.sordellii toxin TcsL.

The protein localises to the cell membrane. It is found in the golgi apparatus membrane. The enzyme catalyses GTP + H2O = GDP + phosphate + H(+). With respect to regulation, alternates between an inactive form bound to GDP and an active form bound to GTP. Activated by a guanine nucleotide-exchange factor (GEF) and inactivated by a GTPase-activating protein (GAP). In terms of biological role, ras proteins bind GDP/GTP and possess intrinsic GTPase activity. This is GTPase NRas (NRAS) from Homo sapiens (Human).